The following is a 435-amino-acid chain: UDP-N-acetylmuramate--L-alanine ligase (435 aa).

108-114 (GAHGKST) is a binding site for ATP.

Belongs to the MurCDEF family.

Its subcellular location is the cytoplasm. The catalysed reaction is UDP-N-acetyl-alpha-D-muramate + L-alanine + ATP = UDP-N-acetyl-alpha-D-muramoyl-L-alanine + ADP + phosphate + H(+). The protein operates within cell wall biogenesis; peptidoglycan biosynthesis. Its function is as follows. Cell wall formation. This is UDP-N-acetylmuramate--L-alanine ligase from Campylobacter curvus (strain 525.92).